We begin with the raw amino-acid sequence, 437 residues long: Protein arginine methyltransferase NDUFAF7, mitochondrial (437 aa).

Residues 1–42 (MSGLARLQRLQKFGFLMVSASANRPIQRYQCSRTEKPQKRTS) constitute a mitochondrion transit peptide.

It belongs to the NDUFAF7 family.

The protein localises to the mitochondrion. The catalysed reaction is L-arginyl-[protein] + 2 S-adenosyl-L-methionine = N(omega),N(omega)'-dimethyl-L-arginyl-[protein] + 2 S-adenosyl-L-homocysteine + 2 H(+). Arginine methyltransferase involved in the assembly or stability of mitochondrial NADH:ubiquinone oxidoreductase complex (complex I). Acts by mediating symmetric dimethylation of 'Arg-118' of ndufs2 after it assembles into the complex I, stabilizing the early intermediate complex. The chain is Protein arginine methyltransferase NDUFAF7, mitochondrial from Xenopus laevis (African clawed frog).